Consider the following 48-residue polypeptide: Mating-type pheromone BAP1(2) (48 aa).

Cys-45 carries the cysteine methyl ester modification. The S-farnesyl cysteine moiety is linked to residue Cys-45. Positions Val-46–Gly-48 are cleaved as a propeptide — removed in mature form.

Its subcellular location is the cell membrane. In terms of biological role, activates B-regulated development. This chain is Mating-type pheromone BAP1(2) (BAP1(2)), found in Schizophyllum commune (Split gill fungus).